The sequence spans 613 residues: MGRIGISCLFPASWHFSISPVGCPRILNTNLRQIVVISILAAAVSLLYFSVVIIRSKYGWLSKDKKFQRYLARVTDVEATDTNNPSVNYGIVVDCGSSGSRIFVYCWPRHNGNPHDLLDIRQMRDKNRKPVVMKIKPGISEFATSPEKVSDYISPLLSFAAEHVPRAKHKETPLYILCTAGMRVLPESQQKAILEDLLTDIPVHYDFLFSDSHAEVISGKQEGVYAWIGINFVLGRFEHIEEDDEAVVEVNIPGSESSEAIVRKRTAGVLDMGGVSTQIAYEVPQTVSFASSQQEEVAKNLLAEFNLGCDVHQTEHVYRVYVATFLGFGGNAARQRYEDRLFASTVQKNRLLGKQTGLTPDAPLLDPCLPLDIKDEIQQNGQTLYLQGTGDFDLCRETLQPFMNKTNETQTSLNGVYQPPIHFQNSEFYGFSEFYYCTEDVLRMGGDYNAARFTQAAKDYCATKWSILRERFDRGLYASHADLHRLKYQCFKSAWMFEVFHKGFSFPVTYKNLKTALQVYDKEVQWTLGAILYRTRFLPLRDIRQEVFRAGHAHWRGVSFVYNHYLFSGCFLVVLLSILLYLLRLRRIHRRAPRTGSLWMEEGLPSQKGPGPL.

At 1–33 the chain is on the cytoplasmic side; sequence MGRIGISCLFPASWHFSISPVGCPRILNTNLRQ. A helical membrane pass occupies residues 34 to 54; sequence IVVISILAAAVSLLYFSVVII. The Lumenal segment spans residues 55-559; that stretch reads RSKYGWLSKD…AGHAHWRGVS (505 aa). Residue glutamate 222 is the Proton acceptor of the active site. Cysteines 368 and 395 form a disulfide. Residues asparagine 404 and asparagine 407 are each glycosylated (N-linked (GlcNAc...) asparagine). An intrachain disulfide couples cysteine 461 to cysteine 490. A helical transmembrane segment spans residues 560 to 580; sequence FVYNHYLFSGCFLVVLLSILL. Residues 581 to 613 are Cytoplasmic-facing; it reads YLLRLRRIHRRAPRTGSLWMEEGLPSQKGPGPL.

Belongs to the GDA1/CD39 NTPase family. The cofactor is Ca(2+). Mg(2+) is required as a cofactor. As to expression, ubiquitous.

The protein localises to the cytoplasmic vesicle. It localises to the autophagosome membrane. It is found in the lysosome membrane. The protein resides in the golgi apparatus membrane. It carries out the reaction a ribonucleoside 5'-triphosphate + H2O = a ribonucleoside 5'-diphosphate + phosphate + H(+). The catalysed reaction is a ribonucleoside 5'-diphosphate + H2O = a ribonucleoside 5'-phosphate + phosphate + H(+). It catalyses the reaction UDP + H2O = UMP + phosphate + H(+). The enzyme catalyses UTP + H2O = UDP + phosphate + H(+). It carries out the reaction CTP + H2O = CDP + phosphate + H(+). The catalysed reaction is GDP + H2O = GMP + phosphate + H(+). It catalyses the reaction 5-methyl-UTP + H2O = 5-methyl-UDP + phosphate + H(+). Its function is as follows. Catalyzes the hydrolysis of nucleoside triphosphates and diphosphates in a calcium- or magnesium-dependent manner, with a preference for pyrimidines. Preferentially hydrolyzes UTP and TTP on UTP and TTP. AMP, ADP, ATP and UMP are not substrates. Preferentially activated by Ca(2+) over Mg(2+). Has a broad substrate specificity with the ability of cleaving all nucleotide di- and triphosphates with the exception of adenosine di- and triphosphate (ADP and ATP). Preferentially hydrolyzes CTP, UDP, CDP, GTP and GDP. Can use either Ca(2+) or Mg(2+) equally. In Mus musculus (Mouse), this protein is Ectonucleoside triphosphate diphosphohydrolase 4 (Entpd4).